Here is a 176-residue protein sequence, read N- to C-terminus: Ribosome rescue factor SmrB (176 aa).

The 76-residue stretch at 97–172 (LDMHGMTQQE…GDGALLVLLS (76 aa)) folds into the Smr domain.

The protein belongs to the SmrB family. As to quaternary structure, associates with collided ribosomes, but not with correctly translating polysomes.

Its function is as follows. Acts as a ribosome collision sensor. Detects stalled/collided disomes (pairs of ribosomes where the leading ribosome is stalled and a second ribosome has collided with it) and endonucleolytically cleaves mRNA at the 5' boundary of the stalled ribosome. Stalled/collided disomes form a new interface (primarily via the 30S subunits) that binds SmrB. Cleaved mRNA becomes available for tmRNA ligation, leading to ribosomal subunit dissociation and rescue of stalled ribosomes. The chain is Ribosome rescue factor SmrB from Vibrio vulnificus (strain CMCP6).